Reading from the N-terminus, the 186-residue chain is Probable RNA 2'-phosphotransferase (186 aa).

It belongs to the KptA/TPT1 family.

Functionally, removes the 2'-phosphate from RNA via an intermediate in which the phosphate is ADP-ribosylated by NAD followed by a presumed transesterification to release the RNA and generate ADP-ribose 1''-2''-cyclic phosphate (APPR&gt;P). May function as an ADP-ribosylase. The polypeptide is Probable RNA 2'-phosphotransferase (Pectobacterium carotovorum subsp. carotovorum (strain PC1)).